Here is a 303-residue protein sequence, read N- to C-terminus: L(+)-tartrate dehydratase subunit alpha (303 aa).

Positions 71, 190, and 277 each coordinate iron-sulfur cluster.

Belongs to the class-I fumarase family. Tetramer of two alpha and two beta subunits. It depends on iron-sulfur cluster as a cofactor.

The enzyme catalyses (2R,3R)-tartrate = oxaloacetate + H2O. This is L(+)-tartrate dehydratase subunit alpha (ttdA) from Escherichia coli O6:H1 (strain CFT073 / ATCC 700928 / UPEC).